We begin with the raw amino-acid sequence, 325 residues long: E3 ubiquitin-protein ligase SIAH2 (325 aa).

The segment covering 1–15 (MSRPSSTGPSANKPC) has biased composition (polar residues). The tract at residues 1-43 (MSRPSSTGPSANKPCSKQPPPPQTPHAPSPAAPPAAATISAAG) is disordered. A Phosphoserine modification is found at serine 6. Residue serine 16 is modified to Phosphoserine; by DYRK2. A compositionally biased stretch (pro residues) spans 17–33 (KQPPPPQTPHAPSPAAP). The residue at position 24 (threonine 24) is a Phosphothreonine; by MAPK14. Serine 29 carries the post-translational modification Phosphoserine; by DYRK2 and MAPK14. Positions 34–43 (PAAATISAAG) are enriched in low complexity. Serine 69 is subject to Phosphoserine; by DYRK2. The RING-type zinc-finger motif lies at 81 to 116 (CPVCFDYVLPPILQCQAGHLVCNQCRQKLSCCPTCR). Threonine 120 is subject to Phosphothreonine; by DYRK2. The segment at 131 to 323 (VASAVLFPCK…LGINVTISTC (193 aa)) is SBD. The SIAH-type zinc finger occupies 134-194 (AVLFPCKYAT…VMSHLMHAHK (61 aa)). Zn(2+) contacts are provided by cysteine 139, cysteine 146, histidine 158, cysteine 162, cysteine 169, cysteine 176, histidine 188, and histidine 193.

Belongs to the SINA (Seven in absentia) family. As to quaternary structure, homodimer. Interacts with UBE2E2. Interacts with VAV1, without mediating its ubiquitin-mediated degradation. Interacts with CACYBP/SIP. Probable component of some large E3 complex possibly composed of UBE2D1, SIAH2, CACYBP/SIP, SKP1, APC and TBL1X. Interacts with UBE2I. Interacts with PEG10, which may inhibit its activity. Interacts with EGLN2 and SNCAIP. Interacts with DYRK2. Interacts with PEG3. Interacts with NR1D1 and NR1D2. Interacts with DCC. Interacts with AXIN1. Phosphorylated at Ser-29 by DYRK2; this increases the ubiquitin ligase activity and promotes degradation of EGLN3. Phosphorylated at Thr-24 and Ser-29 by MAPK14, which mediates the degradation by the proteasome of EGLN3. In terms of tissue distribution, widely expressed at low level in embryos and adults. Expressed in a specific population of germ cells within both the mouse ovary and testis. Absent in primordial oocytes but expressed in all growing oocytes, coincident with their recruitment from the pool of quiescent cells. Its level of expression increases as the oocytes mature. Expressed in Graafian follicles and in fertilized zygotes up until the two cell stage, a time of extensive maternal transcript degradation and zygotic gene activation. Expressed in the testis from postmeiotic spermatids.

The protein localises to the cytoplasm. Its subcellular location is the nucleus. The catalysed reaction is S-ubiquitinyl-[E2 ubiquitin-conjugating enzyme]-L-cysteine + [acceptor protein]-L-lysine = [E2 ubiquitin-conjugating enzyme]-L-cysteine + N(6)-ubiquitinyl-[acceptor protein]-L-lysine.. It participates in protein modification; protein ubiquitination. In terms of biological role, E3 ubiquitin-protein ligase that mediates ubiquitination and subsequent proteasomal degradation of target proteins. E3 ubiquitin ligases accept ubiquitin from an E2 ubiquitin-conjugating enzyme in the form of a thioester and then directly transfers the ubiquitin to targeted substrates. Mediates E3 ubiquitin ligase activity either through direct binding to substrates or by functioning as the essential RING domain subunit of larger E3 complexes. Mediates ubiquitination and proteasomal degradation of DYRK2 in response to hypoxia. Promotes monoubiquitination of SNCA. Triggers the ubiquitin-mediated degradation of many substrates, including proteins involved in transcription regulation (GPS2, POU2AF1, PML, NCOR1), a cell surface receptor (DCC), an antiapoptotic protein (BAG1), and a protein involved in synaptic vesicle function in neurons (SYP). It is thereby involved in apoptosis, tumor suppression, cell cycle, transcription and signaling processes. Has some overlapping function with SIAH1. Triggers the ubiquitin-mediated degradation of TRAF2, whereas SIAH1 does not. Regulates cellular clock function via ubiquitination of the circadian transcriptional repressors NR1D1 and NR1D2 leading to their proteasomal degradation. Plays an important role in mediating the rhythmic degradation/clearance of NR1D1 and NR1D2 contributing to their circadian profile of protein abundance. Mediates ubiquitination and degradation of EGLN2 and EGLN3 in response to the unfolded protein response (UPR), leading to their degradation and subsequent stabilization of ATF4. Also part of the Wnt signaling pathway in which it mediates the Wnt-induced ubiquitin-mediated proteasomal degradation of AXIN1. In Mus musculus (Mouse), this protein is E3 ubiquitin-protein ligase SIAH2 (Siah2).